The following is a 212-amino-acid chain: 2',3'-cyclic-nucleotide 3'-phosphodiesterase (212 aa).

The Proton donor/acceptor role is filled by His-51. Residue Thr-53 coordinates substrate. Catalysis depends on His-146, which acts as the Proton donor/acceptor. The substrate site is built by Ser-148 and Tyr-151.

This sequence belongs to the 2H phosphoesterase superfamily. CPD1 family.

The protein localises to the golgi apparatus. The catalysed reaction is a nucleoside 2',3'-cyclic phosphate + H2O = a nucleoside 2'-phosphate + H(+). Involved in the metabolism of ADP-ribose 1',2'-cyclic phosphate which is produced as a consequence of tRNA splicing. The protein is 2',3'-cyclic-nucleotide 3'-phosphodiesterase (cpd-7) of Neurospora crassa (strain ATCC 24698 / 74-OR23-1A / CBS 708.71 / DSM 1257 / FGSC 987).